The sequence spans 135 residues: Large ribosomal subunit protein uL16c (135 aa).

It belongs to the universal ribosomal protein uL16 family. Part of the 50S ribosomal subunit.

It is found in the plastid. Its subcellular location is the chloroplast. The polypeptide is Large ribosomal subunit protein uL16c (Phaseolus vulgaris (Kidney bean)).